A 956-amino-acid chain; its full sequence is Lon protease homolog, mitochondrial 1 (956 aa).

Disordered regions lie at residues 37–57 (NNNN…NNNN) and 83–123 (KKKG…GNEK). Over residues 91 to 123 (NNDDNDNEKNEKNEKKVKNEKKEKNEKNDGNEK) the composition is skewed to basic and acidic residues. Positions 159 to 357 (VVIYPSNSVN…MLYHMILNEQ (199 aa)) constitute a Lon N-terminal domain. 511-518 (GPPGTGKT) contacts ATP. In terms of domain architecture, Lon proteolytic spans 747–945 (VTPIGVVNGL…KDVFEVAFPN (199 aa)). Residues 777–795 (KPLSSLPPSQQQQNQLEPS) are compositionally biased toward low complexity. The interval 777-800 (KPLSSLPPSQQQQNQLEPSIKTTG) is disordered. Catalysis depends on residues Ser-851 and Lys-894.

The protein belongs to the peptidase S16 family. As to quaternary structure, homohexamer or homoheptamer. Organized in a ring with a central cavity.

It localises to the mitochondrion matrix. It carries out the reaction Hydrolysis of proteins in presence of ATP.. ATP-dependent serine protease that mediates the selective degradation of misfolded, unassembled or oxidatively damaged polypeptides as well as certain short-lived regulatory proteins in the mitochondrial matrix. May also have a chaperone function in the assembly of inner membrane protein complexes. Participates in the regulation of mitochondrial gene expression and in the maintenance of the integrity of the mitochondrial genome. Binds to mitochondrial DNA in a site-specific manner. The chain is Lon protease homolog, mitochondrial 1 from Dictyostelium discoideum (Social amoeba).